Reading from the N-terminus, the 361-residue chain is Dual specificity mitogen-activated protein kinase kinase 6 (361 aa).

Composition is skewed to basic and acidic residues over residues Met-1–Val-11 and Pro-37–Glu-48. Residues Met-1–Asp-61 form a disordered region. Positions Val-30–Val-46 are d domain. One can recognise a Protein kinase domain in the interval Leu-80–Phe-341. ATP contacts are provided by residues Leu-86–Val-94 and Lys-109. Asp-206 serves as the catalytic Proton acceptor. The residue at position 234 (Ser-234) is a Phosphoserine; by MAPK3. A Phosphothreonine; by MAPK3 modification is found at Thr-238. Residues His-338–Asp-361 form a DVD domain region.

This sequence belongs to the protein kinase superfamily. STE Ser/Thr protein kinase family. MAP kinase kinase subfamily. In terms of assembly, dimer. Interacts (via its D domain) with its MAP kinase substrates. Interacts (via its DVD domain) with MAP3Ks activators. Weakly autophosphorylated. Phosphorylated at Ser-234 and Thr-238 by the majority of M3Ks.

The protein resides in the nucleus. Its subcellular location is the cytoplasm. It is found in the cytoskeleton. It catalyses the reaction L-seryl-[protein] + ATP = O-phospho-L-seryl-[protein] + ADP + H(+). The catalysed reaction is L-threonyl-[protein] + ATP = O-phospho-L-threonyl-[protein] + ADP + H(+). The enzyme catalyses L-tyrosyl-[protein] + ATP = O-phospho-L-tyrosyl-[protein] + ADP + H(+). Its activity is regulated as follows. Activated by dual phosphorylation on Ser-234 and Thr-238 in response to a variety of cellular stresses, including UV radiation, osmotic shock, hypoxia, inflammatory cytokines, interferon gamma (IFNG), and less often by growth factors. MAP2K6/MKK6 is activated by the majority of M3Ks. Its function is as follows. Dual specificity protein kinase which acts as an essential component of the MAP kinase signal transduction pathway. Catalyzes the concomitant phosphorylation of a threonine and a tyrosine residue in the MAP kinases p38 and plays an important role in the regulation of cellular responses to cytokines and all kinds of stresses. The p38 MAP kinase signal transduction pathway leads to direct activation of transcription factors. Phosphorylation by MAP2K6 asymmetrically activates p38 on one side of the blastodisc, an event which is necessary for blastomere cleavage. In Danio rerio (Zebrafish), this protein is Dual specificity mitogen-activated protein kinase kinase 6.